A 630-amino-acid polypeptide reads, in one-letter code: Pro-interleukin-16 (630 aa).

Disordered stretches follow at residues 30–268 (ENPG…FPLT) and 316–343 (PKEG…ASDT). The span at 129-143 (IRASSSSSIKQRISS) shows a compositional bias: low complexity. S220 is subject to Phosphoserine. Positions 321 to 343 (SPTSSSNEDSAANGSAETSASDT) are enriched in polar residues. Residues 404-500 (KQLDSIHVTI…IVTRKLTAES (97 aa)) are interaction with PPP1R12A, PPP1R12B and PPP1R12C. 2 PDZ domains span residues 410-495 (HVTI…VTRK) and 532-617 (TVTL…IRRK).

Homotetramer. Pro-interleukin-16 interacts (via PDZ 2 domain) with PPP1R12A, PPP1R12B and PPP1R12C. Pro-interleukin-16 interacts with GRIN2A. Pro-interleukin-16 interacts with GABPB1. Pro-interleukin-16 interacts (via PDZ 3 domain) with HDAC3.

The protein localises to the secreted. Its subcellular location is the cytoplasm. The protein resides in the nucleus. Its function is as follows. Interleukin-16 stimulates a migratory response in CD4+ lymphocytes, monocytes, and eosinophils. Primes CD4+ T-cells for IL-2 and IL-15 responsiveness. Also induces T-lymphocyte expression of interleukin 2 receptor. Ligand for CD4. Functionally, pro-interleukin-16 is involved in cell cycle progression in T-cells. Appears to be involved in transcriptional regulation of SKP2 and is probably part of a transcriptional repression complex on the core promoter of the SKP2 gene. May act as a scaffold for GABPB1 (the DNA-binding subunit the GABP transcription factor complex) and HDAC3 thus maintaining transcriptional repression and blocking cell cycle progression in resting T-cells. In Macaca fascicularis (Crab-eating macaque), this protein is Pro-interleukin-16 (IL16).